Reading from the N-terminus, the 342-residue chain is Dihydroorotase (342 aa).

Residues His-13 and His-15 each contribute to the Zn(2+) site. Residues 15–17 (HLR) and Asn-41 each bind substrate. Zn(2+) contacts are provided by Lys-97, His-134, and His-172. N6-carboxylysine is present on Lys-97. His-134 serves as a coordination point for substrate. Leu-217 lines the substrate pocket. Asp-245 is a binding site for Zn(2+). Residue Asp-245 is part of the active site. Substrate-binding residues include His-249 and Ala-261.

The protein belongs to the metallo-dependent hydrolases superfamily. DHOase family. Class II DHOase subfamily. Homodimer. The cofactor is Zn(2+).

The catalysed reaction is (S)-dihydroorotate + H2O = N-carbamoyl-L-aspartate + H(+). Its pathway is pyrimidine metabolism; UMP biosynthesis via de novo pathway; (S)-dihydroorotate from bicarbonate: step 3/3. Functionally, catalyzes the reversible cyclization of carbamoyl aspartate to dihydroorotate. The protein is Dihydroorotase of Shewanella amazonensis (strain ATCC BAA-1098 / SB2B).